Consider the following 248-residue polypeptide: Meiotic drive suppressor wtf1 (248 aa).

The interval L30–D68 is disordered. 4 consecutive transmembrane segments (helical) span residues F73–C93, W110–F130, I152–T172, and S186–V206.

Belongs to the WTF family. As to quaternary structure, homomer. Interacts with other proteins that exhibit high sequence similarity.

It is found in the spore membrane. The protein resides in the vacuole membrane. In terms of biological role, acts as a suppressor component of the dual wtf meiotic drive system, and can suppress but not confer meiotic drive by compatible poisons. Wtf meiotic drive systems promote unequal transmission of alleles from the parental zygote to progeny spores by encoding a poison and an antidote from the same locus; the poison is trans-acting and forms toxic aggregates in all spores within an ascus, wherease the antidote is spore-specific and targets aggregates for degradation by the vacuole. Meiotic drive by wtf systems therefore lead to poisoning of all progeny that do not inherit the dual poison/antidote allele, or express a compatible antidote. This Schizosaccharomyces pombe (Fission yeast) protein is Meiotic drive suppressor wtf1.